The primary structure comprises 242 residues: Probable transcriptional regulatory protein Bxeno_A1185 (242 aa).

The protein belongs to the TACO1 family.

It is found in the cytoplasm. The sequence is that of Probable transcriptional regulatory protein Bxeno_A1185 from Paraburkholderia xenovorans (strain LB400).